The primary structure comprises 194 residues: Dihydrofolate reductase HdrB (194 aa).

Positions 18–194 (RFVLVAAVAD…ADRGAEESDE (177 aa)) constitute a DHFR domain. NADP(+) contacts are provided by residues Ala-24 and 30–36 (VIGRDGT). Asp-44 serves as a coordination point for substrate. 62–63 (KT) is a binding site for NADP(+). Substrate-binding residues include Arg-69 and Arg-78. NADP(+)-binding positions include 84-85 (TT) and 123-130 (GGATVYEQ). Thr-141 contributes to the substrate binding site. Residues 173-194 (SFVTYERKQPAAADRGAEESDE) are disordered.

This sequence belongs to the dihydrofolate reductase family.

It catalyses the reaction (6S)-5,6,7,8-tetrahydrofolate + NADP(+) = 7,8-dihydrofolate + NADPH + H(+). The protein operates within cofactor biosynthesis; tetrahydrofolate biosynthesis; 5,6,7,8-tetrahydrofolate from 7,8-dihydrofolate: step 1/1. Its activity is regulated as follows. Maximum activity at KCl concentration of 0.5 M and activity decreases with increasing concentration of KCl. Its function is as follows. Key enzyme in folate metabolism. Catalyzes an essential reaction for de novo glycine and purine synthesis, and for DNA precursor synthesis. The chain is Dihydrofolate reductase HdrB (hdrB) from Haloferax volcanii (Halobacterium volcanii).